Reading from the N-terminus, the 218-residue chain is Peptidyl-tRNA hydrolase (218 aa).

Tyr-19 lines the tRNA pocket. Catalysis depends on His-24, which acts as the Proton acceptor. TRNA is bound by residues Tyr-68, Asn-70, and Asn-116. A disordered region spans residues Trp-181 to Pro-218. Residues Pro-192–Pro-204 show a composition bias toward pro residues.

This sequence belongs to the PTH family. As to quaternary structure, monomer.

It is found in the cytoplasm. The enzyme catalyses an N-acyl-L-alpha-aminoacyl-tRNA + H2O = an N-acyl-L-amino acid + a tRNA + H(+). Functionally, hydrolyzes ribosome-free peptidyl-tRNAs (with 1 or more amino acids incorporated), which drop off the ribosome during protein synthesis, or as a result of ribosome stalling. Its function is as follows. Catalyzes the release of premature peptidyl moieties from peptidyl-tRNA molecules trapped in stalled 50S ribosomal subunits, and thus maintains levels of free tRNAs and 50S ribosomes. The chain is Peptidyl-tRNA hydrolase from Azoarcus sp. (strain BH72).